The sequence spans 261 residues: Zinc import ATP-binding protein ZnuC (261 aa).

In terms of domain architecture, ABC transporter spans 6-221 (IRLEQVGVTF…PAFVELFGKN (216 aa)). 38 to 45 (GPNGAGKT) is an ATP binding site.

The protein belongs to the ABC transporter superfamily. Zinc importer (TC 3.A.1.15.5) family. The complex is composed of two ATP-binding proteins (ZnuC), two transmembrane proteins (ZnuB) and a solute-binding protein (ZnuA).

Its subcellular location is the cell inner membrane. The enzyme catalyses Zn(2+)(out) + ATP(in) + H2O(in) = Zn(2+)(in) + ADP(in) + phosphate(in) + H(+)(in). Functionally, part of the ABC transporter complex ZnuABC involved in zinc import. Responsible for energy coupling to the transport system. The polypeptide is Zinc import ATP-binding protein ZnuC (Pseudomonas fluorescens (strain ATCC BAA-477 / NRRL B-23932 / Pf-5)).